The following is a 271-amino-acid chain: MSDMRLIVAGAGGRMGRALTRAISETKGVVLTGALEAPGSELLGQDAGVLAGLPANGVKLSADLWTLSAGADGILDFTVPAATIANVAIAAQRGIVHVIGTTGLSSSDNAVIKSVTDQAIVVKSGNMSLGVNLLAALTRRVAQSLDAGFDIEIVEMHHRAKIDAPSGTALLLGEAAAAGRKVDLDDHSARGRDGVTGARKTGDIGFASLRGGTVTGDHSVIFAGPYERIELAHKAEDRMIFAHGALKAAQWAHGKSPGLYSMMDVLGLAEF.

Residues 10–15 (GAGGRM), Glu36, 100–102 (GTT), and 124–127 (SGNM) each bind NAD(+). His157 acts as the Proton donor/acceptor in catalysis. His158 serves as a coordination point for (S)-2,3,4,5-tetrahydrodipicolinate. The active-site Proton donor is the Lys161. 167–168 (GT) is a (S)-2,3,4,5-tetrahydrodipicolinate binding site.

This sequence belongs to the DapB family.

It localises to the cytoplasm. The enzyme catalyses (S)-2,3,4,5-tetrahydrodipicolinate + NAD(+) + H2O = (2S,4S)-4-hydroxy-2,3,4,5-tetrahydrodipicolinate + NADH + H(+). It carries out the reaction (S)-2,3,4,5-tetrahydrodipicolinate + NADP(+) + H2O = (2S,4S)-4-hydroxy-2,3,4,5-tetrahydrodipicolinate + NADPH + H(+). Its pathway is amino-acid biosynthesis; L-lysine biosynthesis via DAP pathway; (S)-tetrahydrodipicolinate from L-aspartate: step 4/4. Catalyzes the conversion of 4-hydroxy-tetrahydrodipicolinate (HTPA) to tetrahydrodipicolinate. This Rhodopseudomonas palustris (strain BisB5) protein is 4-hydroxy-tetrahydrodipicolinate reductase.